Consider the following 172-residue polypeptide: MISLDKDENEIEHHNEENSLVEQETAPVGQESRQLSASAVKSLSDIAKWGKISGILLIIMGSLVTLSVLMTVIGAIPGVLLIISGVFLMRSAKAAAEAEGNLTGSAGESMLENYGTFIKMQLFYAASSIVTVLIGIIVAIFVLVVIGIAAFENTPSYDDPDSYYYEDDPVFE.

The span at 1-17 shows a compositional bias: basic and acidic residues; that stretch reads MISLDKDENEIEHHNEE. Residues 1–27 form a disordered region; that stretch reads MISLDKDENEIEHHNEENSLVEQETAP. The helical transmembrane segment at 129–151 threads the bilayer; sequence IVTVLIGIIVAIFVLVVIGIAAF.

The protein localises to the membrane. This is an uncharacterized protein from Bacillus subtilis (strain 168).